Consider the following 124-residue polypeptide: Secreted RxLR effector protein 49 (124 aa).

Positions 1 to 22 are cleaved as a signal peptide; it reads MIRRSPLVAVILFVAITHVVLA. Positions 57–60 match the RxLR motif; sequence RSLR.

It belongs to the RxLR effector family.

Its subcellular location is the secreted. It is found in the host cytoplasm. It localises to the host nucleus. Functionally, effector that acts as a broad suppressor of cell death to interrupt plant immunity. Inhibits cell death induced by cell death-inducing proteins, including the PAMP elicitor INF1 from P.infestans. The polypeptide is Secreted RxLR effector protein 49 (Plasmopara viticola (Downy mildew of grapevine)).